We begin with the raw amino-acid sequence, 295 residues long: 3-hydroxy-5-phosphonooxypentane-2,4-dione thiolase (295 aa).

Lys-203 serves as the catalytic Schiff-base intermediate with substrate.

The protein belongs to the DeoC/FbaB aldolase family. Homodecamer.

The protein localises to the cytoplasm. The catalysed reaction is dihydroxyacetone phosphate + acetyl-CoA = 3-hydroxy-2,4-dioxopentyl phosphate + CoA. Involved in the degradation of phospho-AI-2, thereby terminating induction of the lsr operon and closing the AI-2 signaling cycle. Catalyzes the transfer of an acetyl moiety from 3-hydroxy-5-phosphonooxypentane-2,4-dione to CoA to form glycerone phosphate and acetyl-CoA. This is 3-hydroxy-5-phosphonooxypentane-2,4-dione thiolase from Klebsiella pneumoniae subsp. pneumoniae (strain ATCC 700721 / MGH 78578).